We begin with the raw amino-acid sequence, 364 residues long: UDP-N-acetylglucosamine--N-acetylmuramyl-(pentapeptide) pyrophosphoryl-undecaprenol N-acetylglucosamine transferase (364 aa).

UDP-N-acetyl-alpha-D-glucosamine contacts are provided by residues 10–12 (TAG), Asn124, Arg161, Ser195, and Gln291.

This sequence belongs to the glycosyltransferase 28 family. MurG subfamily.

The protein localises to the cell membrane. The enzyme catalyses di-trans,octa-cis-undecaprenyl diphospho-N-acetyl-alpha-D-muramoyl-L-alanyl-D-glutamyl-meso-2,6-diaminopimeloyl-D-alanyl-D-alanine + UDP-N-acetyl-alpha-D-glucosamine = di-trans,octa-cis-undecaprenyl diphospho-[N-acetyl-alpha-D-glucosaminyl-(1-&gt;4)]-N-acetyl-alpha-D-muramoyl-L-alanyl-D-glutamyl-meso-2,6-diaminopimeloyl-D-alanyl-D-alanine + UDP + H(+). It participates in cell wall biogenesis; peptidoglycan biosynthesis. Cell wall formation. Catalyzes the transfer of a GlcNAc subunit on undecaprenyl-pyrophosphoryl-MurNAc-pentapeptide (lipid intermediate I) to form undecaprenyl-pyrophosphoryl-MurNAc-(pentapeptide)GlcNAc (lipid intermediate II). The chain is UDP-N-acetylglucosamine--N-acetylmuramyl-(pentapeptide) pyrophosphoryl-undecaprenol N-acetylglucosamine transferase from Streptomyces coelicolor (strain ATCC BAA-471 / A3(2) / M145).